A 1043-amino-acid polypeptide reads, in one-letter code: RNA cytidine acetyltransferase (1043 aa).

ATP contacts are provided by residues 285-294 (GRGKSAAVGL) and arginine 462. The N-acetyltransferase domain occupies 551-736 (VLMAPIDKSR…VPVYIRQNSN (186 aa)). Residues 622–624 (VAV), 629–635 (QSMGYGG), and arginine 723 contribute to the acetyl-CoA site. The interval 1020-1043 (IPDAKDPANKNAKKKKRFSSGGRR) is disordered. Residues 1030–1043 (NAKKKKRFSSGGRR) are compositionally biased toward basic residues.

It belongs to the RNA cytidine acetyltransferase family. NAT10 subfamily. Part of the small subunit (SSU) processome, composed of more than 70 proteins and the RNA chaperone small nucleolar RNA (snoRNA) U3.

It is found in the nucleus. Its subcellular location is the nucleolus. It catalyses the reaction a cytidine in 18S rRNA + acetyl-CoA + ATP + H2O = an N(4)-acetylcytidine in 18S rRNA + ADP + phosphate + CoA + H(+). The catalysed reaction is a cytidine in tRNA + acetyl-CoA + ATP + H2O = an N(4)-acetylcytidine in tRNA + ADP + phosphate + CoA + H(+). RNA cytidine acetyltransferase with specificity toward both 18S rRNA and tRNAs. Catalyzes the formation of N(4)-acetylcytidine (ac4C) in 18S rRNA. Required for early nucleolar cleavages of precursor rRNA at sites A0, A1 and A2 during 18S rRNA synthesis. Catalyzes the formation of ac4C in serine and leucine tRNAs. Requires a tRNA-binding adapter protein for full tRNA acetyltransferase activity but not for 18S rRNA acetylation. Part of the small subunit (SSU) processome, first precursor of the small eukaryotic ribosomal subunit. During the assembly of the SSU processome in the nucleolus, many ribosome biogenesis factors, an RNA chaperone and ribosomal proteins associate with the nascent pre-rRNA and work in concert to generate RNA folding, modifications, rearrangements and cleavage as well as targeted degradation of pre-ribosomal RNA by the RNA exosome. This chain is RNA cytidine acetyltransferase, found in Caenorhabditis elegans.